Here is a 490-residue protein sequence, read N- to C-terminus: Glutamate--tRNA ligase (490 aa).

The short motif at 10 to 20 is the 'HIGH' region element; the sequence is PSPTGRMHVGN. Cysteine 109, cysteine 111, cysteine 140, and histidine 142 together coordinate Zn(2+). The 'KMSKS' region signature appears at 257 to 261; the sequence is KLSKR. Lysine 260 contacts ATP.

It belongs to the class-I aminoacyl-tRNA synthetase family. Glutamate--tRNA ligase type 1 subfamily. As to quaternary structure, monomer. Requires Zn(2+) as cofactor.

Its subcellular location is the cytoplasm. The enzyme catalyses tRNA(Glu) + L-glutamate + ATP = L-glutamyl-tRNA(Glu) + AMP + diphosphate. Functionally, catalyzes the attachment of glutamate to tRNA(Glu) in a two-step reaction: glutamate is first activated by ATP to form Glu-AMP and then transferred to the acceptor end of tRNA(Glu). The chain is Glutamate--tRNA ligase from Lachnoclostridium phytofermentans (strain ATCC 700394 / DSM 18823 / ISDg) (Clostridium phytofermentans).